A 389-amino-acid polypeptide reads, in one-letter code: Chalcone synthase 1A (389 aa).

The active site involves Cys-164.

This sequence belongs to the thiolase-like superfamily. Chalcone/stilbene synthases family.

The enzyme catalyses (E)-4-coumaroyl-CoA + 3 malonyl-CoA + 3 H(+) = 2',4,4',6'-tetrahydroxychalcone + 3 CO2 + 4 CoA. The protein operates within secondary metabolite biosynthesis; flavonoid biosynthesis. In terms of biological role, the primary product of this enzyme is 4,2',4',6'-tetrahydroxychalcone (also termed naringenin-chalcone or chalcone) which can under specific conditions spontaneously isomerize into naringenin. This chain is Chalcone synthase 1A (CHS-1A), found in Pisum sativum (Garden pea).